The sequence spans 79 residues: ATP synthase subunit c (79 aa).

The next 2 membrane-spanning stretches (helical) occupy residues 11 to 31 and 53 to 73; these read IAAA…IGIL and FFIV…LSLY.

This sequence belongs to the ATPase C chain family. F-type ATPases have 2 components, F(1) - the catalytic core - and F(0) - the membrane proton channel. F(1) has five subunits: alpha(3), beta(3), gamma(1), delta(1), epsilon(1). F(0) has three main subunits: a(1), b(2) and c(10-14). The alpha and beta chains form an alternating ring which encloses part of the gamma chain. F(1) is attached to F(0) by a central stalk formed by the gamma and epsilon chains, while a peripheral stalk is formed by the delta and b chains.

Its subcellular location is the cell inner membrane. Its function is as follows. F(1)F(0) ATP synthase produces ATP from ADP in the presence of a proton or sodium gradient. F-type ATPases consist of two structural domains, F(1) containing the extramembraneous catalytic core and F(0) containing the membrane proton channel, linked together by a central stalk and a peripheral stalk. During catalysis, ATP synthesis in the catalytic domain of F(1) is coupled via a rotary mechanism of the central stalk subunits to proton translocation. In terms of biological role, key component of the F(0) channel; it plays a direct role in translocation across the membrane. A homomeric c-ring of between 10-14 subunits forms the central stalk rotor element with the F(1) delta and epsilon subunits. The protein is ATP synthase subunit c of Blochmanniella floridana.